The chain runs to 352 residues: Molybdenum import ATP-binding protein ModC (352 aa).

The ABC transporter domain maps to 2 to 230 (MLEINVKKRL…PLFEPWQEQG (229 aa)). ATP is bound at residue 32 to 39 (GISGSGKS). One can recognise a Mop domain in the interval 290 to 352 (KTSIRNILSG…YAQIKAVSVM (63 aa)).

This sequence belongs to the ABC transporter superfamily. Molybdate importer (TC 3.A.1.8) family. The complex is composed of two ATP-binding proteins (ModC), two transmembrane proteins (ModB) and a solute-binding protein (ModA).

It is found in the cell inner membrane. The enzyme catalyses molybdate(out) + ATP + H2O = molybdate(in) + ADP + phosphate + H(+). Functionally, part of the ABC transporter complex ModABC involved in molybdenum import. Responsible for energy coupling to the transport system. The polypeptide is Molybdenum import ATP-binding protein ModC (Mannheimia succiniciproducens (strain KCTC 0769BP / MBEL55E)).